The sequence spans 409 residues: 2-methylfumaryl-CoA isomerase (409 aa).

The active-site Nucleophile is Asp-165.

This sequence belongs to the CoA-transferase III family. Mesaconyl-CoA isomerase subfamily. In terms of assembly, homodimer.

The enzyme catalyses 2-methylfumaryl-CoA = 3-methylfumaryl-CoA. Partially inhibited by hydroxylamine. Its function is as follows. Involved in the glyoxylate assimilation cycle used to regenerate acetyl-CoA and produce pyruvate as universal precursor for biosynthesis. This reaction involves an intramolecular CoA transferase that catalyzes the reversible transfer of the CoA moiety from the C1-carboxyl group of mesaconyl-CoA to the C4-carboxyl group. It does not require free mesaconate as CoA acceptor. The chain is 2-methylfumaryl-CoA isomerase (mct) from Chloroflexus aurantiacus (strain ATCC 29366 / DSM 635 / J-10-fl).